The primary structure comprises 154 residues: Probable prefoldin subunit 5 (154 aa).

It belongs to the prefoldin subunit alpha family. Heterohexamer of two PFD-alpha type and four PFD-beta type subunits.

In terms of biological role, binds specifically to cytosolic chaperonin (c-CPN) and transfers target proteins to it. Binds to nascent polypeptide chain and promotes folding in an environment in which there are many competing pathways for nonnative proteins. The sequence is that of Probable prefoldin subunit 5 from Caenorhabditis briggsae.